We begin with the raw amino-acid sequence, 193 residues long: Segregation and condensation protein B (193 aa).

Belongs to the ScpB family. Homodimer. Homodimerization may be required to stabilize the binding of ScpA to the Smc head domains. Component of a cohesin-like complex composed of ScpA, ScpB and the Smc homodimer, in which ScpA and ScpB bind to the head domain of Smc. The presence of the three proteins is required for the association of the complex with DNA.

It is found in the cytoplasm. Participates in chromosomal partition during cell division. May act via the formation of a condensin-like complex containing Smc and ScpA that pull DNA away from mid-cell into both cell halves. The protein is Segregation and condensation protein B of Streptococcus thermophilus (strain CNRZ 1066).